The primary structure comprises 96 residues: Xylulose kinase (96 aa).

Residue 71–72 (QH) participates in substrate binding.

This sequence belongs to the FGGY kinase family.

The catalysed reaction is D-xylulose + ATP = D-xylulose 5-phosphate + ADP + H(+). Functionally, catalyzes the phosphorylation of D-xylulose to D-xylulose 5-phosphate. The polypeptide is Xylulose kinase (Arthrobacter sp. (strain NRRL B3728)).